A 96-amino-acid polypeptide reads, in one-letter code: Aspartyl/glutamyl-tRNA(Asn/Gln) amidotransferase subunit C (96 aa).

The protein belongs to the GatC family. As to quaternary structure, heterotrimer of A, B and C subunits.

It catalyses the reaction L-glutamyl-tRNA(Gln) + L-glutamine + ATP + H2O = L-glutaminyl-tRNA(Gln) + L-glutamate + ADP + phosphate + H(+). The enzyme catalyses L-aspartyl-tRNA(Asn) + L-glutamine + ATP + H2O = L-asparaginyl-tRNA(Asn) + L-glutamate + ADP + phosphate + 2 H(+). Its function is as follows. Allows the formation of correctly charged Asn-tRNA(Asn) or Gln-tRNA(Gln) through the transamidation of misacylated Asp-tRNA(Asn) or Glu-tRNA(Gln) in organisms which lack either or both of asparaginyl-tRNA or glutaminyl-tRNA synthetases. The reaction takes place in the presence of glutamine and ATP through an activated phospho-Asp-tRNA(Asn) or phospho-Glu-tRNA(Gln). The polypeptide is Aspartyl/glutamyl-tRNA(Asn/Gln) amidotransferase subunit C (Bacillus anthracis (strain A0248)).